We begin with the raw amino-acid sequence, 189 residues long: Elongation factor P (189 aa).

Belongs to the elongation factor P family.

Its subcellular location is the cytoplasm. Its pathway is protein biosynthesis; polypeptide chain elongation. Its function is as follows. Involved in peptide bond synthesis. Stimulates efficient translation and peptide-bond synthesis on native or reconstituted 70S ribosomes in vitro. Probably functions indirectly by altering the affinity of the ribosome for aminoacyl-tRNA, thus increasing their reactivity as acceptors for peptidyl transferase. The polypeptide is Elongation factor P (Pseudomonas savastanoi pv. phaseolicola (strain 1448A / Race 6) (Pseudomonas syringae pv. phaseolicola (strain 1448A / Race 6))).